We begin with the raw amino-acid sequence, 754 residues long: Cytosolic neutral trehalase (754 aa).

Polar residues predominate over residues 1 to 10; that stretch reads MDGKVNNNPP. Disordered stretches follow at residues 1–47 and 54–73; these read MDGK…LSKN and TFSV…YTSP. Residues aspartate 117, aspartate 119, asparagine 121, glutamine 123, and aspartate 128 each coordinate Ca(2+). Residues arginine 305, 312 to 313, asparagine 349, 358 to 360, glutamate 427, arginine 476, and glycine 479 each bind substrate; these read WD and RSQ. Catalysis depends on proton donor/acceptor residues aspartate 481 and glutamate 676.

Belongs to the glycosyl hydrolase 37 family. Ca(2+) is required as a cofactor.

It is found in the cytoplasm. It carries out the reaction alpha,alpha-trehalose + H2O = alpha-D-glucose + beta-D-glucose. It participates in carbohydrate degradation. Functionally, hydrolyzes intracellular trehalose to glucose. The disaccharide trehalose serves as a storage molecule for energy and carbohydrates that is mobilized during nutrient stress. The chain is Cytosolic neutral trehalase from Kluyveromyces lactis (strain ATCC 8585 / CBS 2359 / DSM 70799 / NBRC 1267 / NRRL Y-1140 / WM37) (Yeast).